Here is a 172-residue protein sequence, read N- to C-terminus: Disulfide bond formation protein B (172 aa).

Over Met1–Gln11 the chain is Cytoplasmic. A helical membrane pass occupies residues Phe12–Tyr28. Over Val29–Ile46 the chain is Periplasmic. Cys38 and Cys41 form a disulfide bridge. A helical membrane pass occupies residues Ala47–Pro63. The Cytoplasmic segment spans residues Arg64–Lys70. The chain crosses the membrane as a helical span at residues Val71–Ala88. Residues Arg89–Met145 lie on the Periplasmic side of the membrane. Cys104 and Cys131 are joined by a disulfide. Residues Trp146–Lys164 form a helical membrane-spanning segment. Over Ala165–His172 the chain is Cytoplasmic.

This sequence belongs to the DsbB family.

Its subcellular location is the cell inner membrane. Functionally, required for disulfide bond formation in some periplasmic proteins. Acts by oxidizing the DsbA protein. This Xanthomonas oryzae pv. oryzae (strain MAFF 311018) protein is Disulfide bond formation protein B.